The primary structure comprises 276 residues: Energy-coupling factor transporter ATP-binding protein EcfA1 (276 aa).

In terms of domain architecture, ABC transporter spans 2–237 (IEIKNLKFKY…GSELVDLGLD (236 aa)). 37–44 (GHNGSGKS) contacts ATP.

It belongs to the ABC transporter superfamily. Energy-coupling factor EcfA family. In terms of assembly, forms a stable energy-coupling factor (ECF) transporter complex composed of 2 membrane-embedded substrate-binding proteins (S component), 2 ATP-binding proteins (A component) and 2 transmembrane proteins (T component).

The protein resides in the cell membrane. Its function is as follows. ATP-binding (A) component of a common energy-coupling factor (ECF) ABC-transporter complex. Unlike classic ABC transporters this ECF transporter provides the energy necessary to transport a number of different substrates. The polypeptide is Energy-coupling factor transporter ATP-binding protein EcfA1 (Streptococcus thermophilus (strain ATCC BAA-491 / LMD-9)).